The following is a 555-amino-acid chain: MRRSKRFEVLAQRPVNQDGLIGEWPEEGLIAMESPYDPASSVKVENGRIVELDGKSRAEFDMIDRFIADYAINVPEAERAMQLDALEIARMLVDIHVSREEIIAITTAITPAKRLEVMAQMNVVEMMMALQKMRARRTPSNQCHVTNLKDNPVQIAADAAEAGIRGFSEQETTVGIARYAPFNALALLVGSQCGAPGVLTQCSVEEATELELGMRGLTSYAETVSVYGTESVFTDGDDTPWSKAFLASAYASRGLKMRYTSGTGSEALMGYSESKSMLYLESRCIFITKGAGVQGLQNGAVSCIGMTGAVPSGIRAVLAENLIASMLDLEVASANDQTFSHSDIRRTARTLMQMLPGTDFIFSGYSAVPNYDNMFAGSNFDAEDFDDYNILQRDLMVDGGLRPVTEEETIAIRNKAARAIQAVFRELGLPLISDEEVDAATYAHGSKDMPARNVVEDLAAVEEMMKRNITGLDIVGALSSSGFEDIASNILNMLRQRVTGDYLQTSAILDRQFDVVSAVNDINDYQGPGTGYRISAERWAEIKNIAGVVQPGSIE.

The protein belongs to the diol/glycerol dehydratase large subunit family. Probably consists of three subunits: large, medium, and small. The cofactor is adenosylcob(III)alamin.

It carries out the reaction glycerol = 3-hydroxypropanal + H2O. The polypeptide is Glycerol dehydratase large subunit (dhaB) (Citrobacter freundii).